A 391-amino-acid polypeptide reads, in one-letter code: 3-ketoacyl-CoA thiolase (391 aa).

The Acyl-thioester intermediate role is filled by C95. Catalysis depends on proton acceptor residues H347 and C377.

The protein belongs to the thiolase-like superfamily. Thiolase family. In terms of assembly, heterotetramer of two alpha chains (FadB) and two beta chains (FadA).

It localises to the cytoplasm. The catalysed reaction is an acyl-CoA + acetyl-CoA = a 3-oxoacyl-CoA + CoA. The protein operates within lipid metabolism; fatty acid beta-oxidation. Functionally, catalyzes the final step of fatty acid oxidation in which acetyl-CoA is released and the CoA ester of a fatty acid two carbons shorter is formed. This chain is 3-ketoacyl-CoA thiolase, found in Pseudomonas fluorescens (strain Pf0-1).